Reading from the N-terminus, the 273-residue chain is MKLTIAISLASILLLSVAHVAQGCDCGCPTTSPKPCQTTVPTCAPTTTTTTTTTCAPPTRPPPPPCTDAPTTTKRTTEKSTTRRTTTTTRQTTTRPTTTTTTTTTTRRPTTRSTTTRHTTTTTTTTRRPTTTTTTTRRPTTTTTTTRRPTTTTTTTRRPTTTTTTTRLPTTRSTTTRQTTKSTTSKRPTHETTTTSKRPTQETTTTTRRATQATTTPKPTNKPGCGCKSCGPGGIPCGSCPKRQGLCTELNNLLRQLERRVRECVCGQPVWLL.

The signal sequence occupies residues 1–23 (MKLTIAISLASILLLSVAHVAQG). Over residues 47 to 57 (TTTTTTTTCAP) the composition is skewed to low complexity. Residues 47–225 (TTTTTTTTCA…TPKPTNKPGC (179 aa)) are disordered. Residues 58-67 (PTRPPPPPCT) show a composition bias toward pro residues. Residues 83 to 225 (RRTTTTTRQT…TPKPTNKPGC (143 aa)) show a composition bias toward low complexity.

The protein is Salivary glue protein Sgs-3 (Sgs3) of Drosophila yakuba (Fruit fly).